A 638-amino-acid polypeptide reads, in one-letter code: 3D-(3,5/4)-trihydroxycyclohexane-1,2-dione hydrolase (638 aa).

Residue Glu67 participates in thiamine diphosphate binding. A thiamine pyrophosphate binding region spans residues 442 to 523 (SLPGDLQRLW…INIMLFDNSG (82 aa)). Mg(2+) contacts are provided by Asp494 and Asn521.

The protein belongs to the TPP enzyme family. Mg(2+) is required as a cofactor. It depends on thiamine diphosphate as a cofactor.

The catalysed reaction is 3D-3,5/4-trihydroxycyclohexane-1,2-dione + H2O = 5-deoxy-D-glucuronate + H(+). It functions in the pathway polyol metabolism; myo-inositol degradation into acetyl-CoA; acetyl-CoA from myo-inositol: step 3/7. In terms of biological role, involved in the cleavage of the C1-C2 bond of 3D-(3,5/4)-trihydroxycyclohexane-1,2-dione (THcHDO) to yield 5-deoxy-glucuronate (5DG). The polypeptide is 3D-(3,5/4)-trihydroxycyclohexane-1,2-dione hydrolase (Listeria innocua serovar 6a (strain ATCC BAA-680 / CLIP 11262)).